Reading from the N-terminus, the 253-residue chain is Transcriptional regulatory protein TcrA (253 aa).

The Response regulatory domain maps to 24–138; sequence RILVVEDEPK…ELFARLRALS (115 aa). At aspartate 73 the chain carries 4-aspartylphosphate. The segment at residues 146–244 is a DNA-binding region (ompR/PhoB-type); that stretch reads PPTLEAGDLR…IRGAGYRLRK (99 aa).

As to quaternary structure, interacts with HK2. Post-translationally, phosphorylated by HK2.

It localises to the cytoplasm. In terms of biological role, member of the three-protein two-component system HK1/HK2/TcrA. The polypeptide is Transcriptional regulatory protein TcrA (tcrA) (Mycobacterium tuberculosis (strain ATCC 25618 / H37Rv)).